A 92-amino-acid polypeptide reads, in one-letter code: Small ribosomal subunit protein uS19 (92 aa).

The protein belongs to the universal ribosomal protein uS19 family.

In terms of biological role, protein S19 forms a complex with S13 that binds strongly to the 16S ribosomal RNA. This chain is Small ribosomal subunit protein uS19, found in Dinoroseobacter shibae (strain DSM 16493 / NCIMB 14021 / DFL 12).